Reading from the N-terminus, the 389-residue chain is S-adenosylmethionine synthase (389 aa).

Histidine 15 is a binding site for ATP. Aspartate 17 contacts Mg(2+). Glutamate 43 serves as a coordination point for K(+). Residues glutamate 56 and glutamine 99 each coordinate L-methionine. Residues 99-109 (QSPDIAQGVNE) are flexible loop. ATP-binding positions include 166–168 (DAK), 234–235 (RF), aspartate 243, 249–250 (RK), alanine 266, and lysine 270. Aspartate 243 is a binding site for L-methionine. Lysine 274 provides a ligand contact to L-methionine.

Belongs to the AdoMet synthase family. In terms of assembly, homotetramer; dimer of dimers. Requires Mg(2+) as cofactor. The cofactor is K(+).

It localises to the cytoplasm. It catalyses the reaction L-methionine + ATP + H2O = S-adenosyl-L-methionine + phosphate + diphosphate. Its pathway is amino-acid biosynthesis; S-adenosyl-L-methionine biosynthesis; S-adenosyl-L-methionine from L-methionine: step 1/1. Functionally, catalyzes the formation of S-adenosylmethionine (AdoMet) from methionine and ATP. The overall synthetic reaction is composed of two sequential steps, AdoMet formation and the subsequent tripolyphosphate hydrolysis which occurs prior to release of AdoMet from the enzyme. This is S-adenosylmethionine synthase from Neisseria gonorrhoeae (strain ATCC 700825 / FA 1090).